The primary structure comprises 285 residues: Acetyl-coenzyme A carboxylase carboxyl transferase subunit beta (285 aa).

Positions 22 to 285 (LWTKCEACGA…HPGVAYAPGV (264 aa)) constitute a CoA carboxyltransferase N-terminal domain. Cys-26, Cys-29, Cys-45, and Cys-48 together coordinate Zn(2+). The C4-type zinc-finger motif lies at 26 to 48 (CEACGAQIYKKEFQENLHVCPKC).

This sequence belongs to the AccD/PCCB family. Acetyl-CoA carboxylase is a heterohexamer composed of biotin carboxyl carrier protein (AccB), biotin carboxylase (AccC) and two subunits each of ACCase subunit alpha (AccA) and ACCase subunit beta (AccD). The cofactor is Zn(2+).

The protein localises to the cytoplasm. The enzyme catalyses N(6)-carboxybiotinyl-L-lysyl-[protein] + acetyl-CoA = N(6)-biotinyl-L-lysyl-[protein] + malonyl-CoA. It functions in the pathway lipid metabolism; malonyl-CoA biosynthesis; malonyl-CoA from acetyl-CoA: step 1/1. Functionally, component of the acetyl coenzyme A carboxylase (ACC) complex. Biotin carboxylase (BC) catalyzes the carboxylation of biotin on its carrier protein (BCCP) and then the CO(2) group is transferred by the transcarboxylase to acetyl-CoA to form malonyl-CoA. The protein is Acetyl-coenzyme A carboxylase carboxyl transferase subunit beta of Thermus thermophilus (strain ATCC BAA-163 / DSM 7039 / HB27).